Here is a 149-residue protein sequence, read N- to C-terminus: Large ribosomal subunit protein uL13 (149 aa).

The protein belongs to the universal ribosomal protein uL13 family. In terms of assembly, part of the 50S ribosomal subunit.

In terms of biological role, this protein is one of the early assembly proteins of the 50S ribosomal subunit, although it is not seen to bind rRNA by itself. It is important during the early stages of 50S assembly. In Borrelia turicatae (strain 91E135), this protein is Large ribosomal subunit protein uL13.